The primary structure comprises 714 residues: RB-associated KRAB zinc finger protein (714 aa).

Positions 8–79 (VSFKDVAVDF…GGEFPCQHSP (72 aa)) constitute a KRAB domain. Glycyl lysine isopeptide (Lys-Gly) (interchain with G-Cter in SUMO2) cross-links involve residues K97 and K259. The segment at 171 to 260 (TYHGEKMCEF…YQRSQMEMKP (90 aa)) is required for interaction with RB1. C2H2-type zinc fingers lie at residues 261-283 (FECS…QRAH) and 289-311 (YECN…RRSH). K315 participates in a covalent cross-link: Glycyl lysine isopeptide (Lys-Gly) (interchain with G-Cter in SUMO2). C2H2-type zinc fingers lie at residues 317 to 339 (YKCN…LRTH), 345 to 367 (YECS…QRNH), 373 to 395 (YPCN…QRTH), 401 to 423 (YKCN…QRTH), 429 to 451 (YQCS…YRSH), 457 to 479 (YECN…RKVH), and 485 to 505 (HECS…HTAH). A Glycyl lysine isopeptide (Lys-Gly) (interchain with G-Cter in SUMO2) cross-link involves residue K357. Positions 417 to 714 (ITHQRTHTGE…NMNVLDVENL (298 aa)) are interaction with AR. Residues 511–533 (YECNECGKTFLVNSAFDGHQPLP) form a C2H2-type 10; degenerate zinc finger. Glycyl lysine isopeptide (Lys-Gly) (interchain with G-Cter in SUMO2) cross-links involve residues K534 and K537. 6 C2H2-type zinc fingers span residues 539 to 561 (YECN…YRSH), 567 to 589 (YGCS…QRVH), 595 to 617 (YECY…HRIH), 623 to 645 (YECS…YRSH), 651 to 673 (YECN…YRTH), and 679 to 701 (YECN…QRIH).

This sequence belongs to the krueppel C2H2-type zinc-finger protein family. As to quaternary structure, interacts with AR and RB1. May also interact with other nuclear hormone receptors such as NR3C1/GR. As to expression, expressed in bone, brain, heart, kidney, liver, lung, pancreas and placenta.

It is found in the nucleus. Its function is as follows. May repress E2F-dependent transcription. May promote AR-dependent transcription. The polypeptide is RB-associated KRAB zinc finger protein (RBAK) (Homo sapiens (Human)).